Consider the following 254-residue polypeptide: Imidazole glycerol phosphate synthase subunit HisF (254 aa).

Active-site residues include Asp12 and Asp132.

The protein belongs to the HisA/HisF family. As to quaternary structure, heterodimer of HisH and HisF.

It localises to the cytoplasm. The enzyme catalyses 5-[(5-phospho-1-deoxy-D-ribulos-1-ylimino)methylamino]-1-(5-phospho-beta-D-ribosyl)imidazole-4-carboxamide + L-glutamine = D-erythro-1-(imidazol-4-yl)glycerol 3-phosphate + 5-amino-1-(5-phospho-beta-D-ribosyl)imidazole-4-carboxamide + L-glutamate + H(+). It functions in the pathway amino-acid biosynthesis; L-histidine biosynthesis; L-histidine from 5-phospho-alpha-D-ribose 1-diphosphate: step 5/9. IGPS catalyzes the conversion of PRFAR and glutamine to IGP, AICAR and glutamate. The HisF subunit catalyzes the cyclization activity that produces IGP and AICAR from PRFAR using the ammonia provided by the HisH subunit. The polypeptide is Imidazole glycerol phosphate synthase subunit HisF (Symbiobacterium thermophilum (strain DSM 24528 / JCM 14929 / IAM 14863 / T)).